The following is a 565-amino-acid chain: Augmin complex subunit dgt3 (565 aa).

Coiled coils occupy residues 135-171 (ELQL…AKKA) and 212-241 (QDYD…IQFY).

Belongs to the HAUS3 family. As to quaternary structure, component of the augmin complex composed of dgt2, dgt3, dgt4, dgt5, dgt6, msd1, msd5 and wac. The complex interacts directly or indirectly with microtubules and is required for centrosome-independent generation of spindle microtubules.

It is found in the cytoplasm. The protein resides in the cytoskeleton. Its subcellular location is the spindle. Its function is as follows. As part of the augmin complex, plays a role in centrosome-independent generation of spindle microtubules. The complex is required for mitotic spindle assembly through its involvement in localizing gamma-tubulin to spindle microtubules. This Drosophila melanogaster (Fruit fly) protein is Augmin complex subunit dgt3.